Here is a 243-residue protein sequence, read N- to C-terminus: Urease accessory protein UreF 2 (243 aa).

This sequence belongs to the UreF family. UreD, UreF and UreG form a complex that acts as a GTP-hydrolysis-dependent molecular chaperone, activating the urease apoprotein by helping to assemble the nickel containing metallocenter of UreC. The UreE protein probably delivers the nickel.

It is found in the cytoplasm. Its function is as follows. Required for maturation of urease via the functional incorporation of the urease nickel metallocenter. Disrupting the ure2 operon has no effect on urease activity or pathogen survival in BALB/c mice when administered orally. This chain is Urease accessory protein UreF 2, found in Brucella abortus (strain 2308).